We begin with the raw amino-acid sequence, 163 residues long: Arginine repressor (163 aa).

Belongs to the ArgR family.

It is found in the cytoplasm. It functions in the pathway amino-acid biosynthesis; L-arginine biosynthesis [regulation]. In terms of biological role, regulates arginine biosynthesis genes. In Corynebacterium diphtheriae (strain ATCC 700971 / NCTC 13129 / Biotype gravis), this protein is Arginine repressor.